The chain runs to 299 residues: Prolyl 4-hydroxylase 2 (299 aa).

Topologically, residues 1–5 (MSMSR) are cytoplasmic. The chain crosses the membrane as a helical; Signal-anchor for type II membrane protein span at residues 6–26 (LGLLLFVAILLVLLQSSTCLI). The Lumenal segment spans residues 27 to 299 (SSPSSIINPS…GNCRRSCKAC (273 aa)). A Fe2OG dioxygenase domain is found at 121-246 (NGEDLQVLRY…KWSATKWIHV (126 aa)). 2 residues coordinate Fe cation: H139 and D141. N165 is a glycosylation site (N-linked (GlcNAc...) asparagine). H227 is a binding site for Fe cation. K237 serves as a coordination point for 2-oxoglutarate. N-linked (GlcNAc...) asparagine glycans are attached at residues N258 and N263. One can recognise a ShKT domain in the interval 259–299 (CTDVNESCERWAVLGECGKNPEYMVGTPEIPGNCRRSCKAC). 3 cysteine pairs are disulfide-bonded: C259/C299, C266/C292, and C275/C296.

Belongs to the P4HA family. Fe(2+) serves as cofactor. The cofactor is L-ascorbate. Expressed in epidermal root hair cells (trichoblasts).

It is found in the endoplasmic reticulum membrane. The protein resides in the golgi apparatus membrane. It catalyses the reaction L-prolyl-[collagen] + 2-oxoglutarate + O2 = trans-4-hydroxy-L-prolyl-[collagen] + succinate + CO2. Functionally, catalyzes the post-translational formation of 4-hydroxyproline in -Xaa-Pro-Gly- sequences in proline-rich peptide sequences of plant glycoproteins and other proteins. Hydroxyprolines are important constituent of many plant cell wall glycoproteins such as extensins, hydroxyproline-rich glycoproteins, lectins and arabinogalactan proteins. Possesses high affinity for leucine-rich repeat and proline-rich extensins of root cell walls that are essential for root hair development. Hydroxyprolines define the subsequent O-glycosylation sites by arabinosyltransferases which elongate the O-arabinosides on extensins. Has low affinity for the substrates tested in vitro. This chain is Prolyl 4-hydroxylase 2, found in Arabidopsis thaliana (Mouse-ear cress).